Here is a 338-residue protein sequence, read N- to C-terminus: Inorganic pyrophosphatase (338 aa).

Diphosphate is bound at residue R129. Residues D166, D171, and D203 each coordinate Mg(2+).

The protein belongs to the PPase family. As to quaternary structure, component of the NURF complex composed of Caf1-55, E(bx), Nurf-38 and Iswi. It depends on Mg(2+) as a cofactor.

It localises to the cytoplasm. The protein resides in the nucleus. The catalysed reaction is diphosphate + H2O = 2 phosphate + H(+). Functionally, component of NURF (nucleosome remodeling factor), a complex which catalyzes ATP-dependent nucleosome sliding and facilitates transcription of chromatin. NURF is required for homeotic gene expression, proper larval blood cell development, normal male X chromosome morphology, ecdysteroid signaling and metamorphosis. Inorganic pyrophosphatase (PPase), hydrolyzes inorganic pyrophosphate to inorganic phosphate, essential for driving critical biosynthetic reactions including transcription, replication, and DNA repair. The chain is Inorganic pyrophosphatase (Nurf-38) from Drosophila melanogaster (Fruit fly).